A 513-amino-acid polypeptide reads, in one-letter code: tRNA-2-methylthio-N(6)-dimethylallyladenosine synthase (513 aa).

The region spanning 67-185 (KTFLIKTYGC…LPEILEEAYL (119 aa)) is the MTTase N-terminal domain. 6 residues coordinate [4Fe-4S] cluster: cysteine 76, cysteine 112, cysteine 146, cysteine 222, cysteine 226, and cysteine 229. The 231-residue stretch at 208-438 (REGNIKAWVN…NKKVACYSER (231 aa)) folds into the Radical SAM core domain. In terms of domain architecture, TRAM spans 441–504 (QQYEGQTVQV…QFSLNGTFIS (64 aa)).

It belongs to the methylthiotransferase family. MiaB subfamily. Monomer. Requires [4Fe-4S] cluster as cofactor.

It is found in the cytoplasm. The catalysed reaction is N(6)-dimethylallyladenosine(37) in tRNA + (sulfur carrier)-SH + AH2 + 2 S-adenosyl-L-methionine = 2-methylsulfanyl-N(6)-dimethylallyladenosine(37) in tRNA + (sulfur carrier)-H + 5'-deoxyadenosine + L-methionine + A + S-adenosyl-L-homocysteine + 2 H(+). Its function is as follows. Catalyzes the methylthiolation of N6-(dimethylallyl)adenosine (i(6)A), leading to the formation of 2-methylthio-N6-(dimethylallyl)adenosine (ms(2)i(6)A) at position 37 in tRNAs that read codons beginning with uridine. In Staphylococcus saprophyticus subsp. saprophyticus (strain ATCC 15305 / DSM 20229 / NCIMB 8711 / NCTC 7292 / S-41), this protein is tRNA-2-methylthio-N(6)-dimethylallyladenosine synthase.